Reading from the N-terminus, the 565-residue chain is Transmembrane 7 superfamily member 3 (565 aa).

The N-terminal stretch at 1–21 is a signal peptide; that stretch reads MWRLRLLVLAVLAAGSAEAQA. Asparagine 22, asparagine 56, asparagine 70, and asparagine 259 each carry an N-linked (GlcNAc...) asparagine glycan. 7 helical membrane-spanning segments follow: residues 287–307, 315–335, 341–361, 364–384, 402–422, 427–447, and 478–498; these read VSTK…CFFG, LFFV…TRLT, VRLA…VASW, FGIL…LVSS, VFWV…MGCL, ILAC…SYMF, and NDYI…TLQI.

It is found in the cell membrane. Its function is as follows. Involved in the inhibition of cytokine-induced death of pancreatic beta cells. Involved in the promotion of insulin secretion from pancreatic beta cells. Is a downstream transcriptional target of p53/TP53, and acts as a pro-survival homeostatic factor that attenuates the development of cellular stress. Maintains protein homeostasis and promotes cell survival through attenuation of endoplasmic reticulum (ER) stress and the subsequent induction of unfolded protein response (UPR). This Mus musculus (Mouse) protein is Transmembrane 7 superfamily member 3 (Tm7sf3).